The chain runs to 172 residues: Ribosome maturation factor RimM (172 aa).

Residues 96–168 (EGEFYYHQII…RVDVELMEGL (73 aa)) form the PRC barrel domain.

It belongs to the RimM family. As to quaternary structure, binds ribosomal protein uS19.

The protein resides in the cytoplasm. Functionally, an accessory protein needed during the final step in the assembly of 30S ribosomal subunit, possibly for assembly of the head region. Essential for efficient processing of 16S rRNA. May be needed both before and after RbfA during the maturation of 16S rRNA. It has affinity for free ribosomal 30S subunits but not for 70S ribosomes. This chain is Ribosome maturation factor RimM, found in Streptococcus pyogenes serotype M3 (strain ATCC BAA-595 / MGAS315).